The primary structure comprises 420 residues: Multifunctional CCA protein (420 aa).

ATP is bound by residues Gly8 and Arg11. The CTP site is built by Gly8 and Arg11. Mg(2+)-binding residues include Asp21 and Asp23. Residues Arg91, Arg137, and Arg140 each coordinate ATP. 3 residues coordinate CTP: Arg91, Arg137, and Arg140. The HD domain occupies 228 to 334; the sequence is TFVHTMLVLQ…LKLFNRLDVW (107 aa).

The protein belongs to the tRNA nucleotidyltransferase/poly(A) polymerase family. Bacterial CCA-adding enzyme type 1 subfamily. Monomer. Can also form homodimers and oligomers. The cofactor is Mg(2+). Ni(2+) is required as a cofactor.

The enzyme catalyses a tRNA precursor + 2 CTP + ATP = a tRNA with a 3' CCA end + 3 diphosphate. The catalysed reaction is a tRNA with a 3' CCA end + 2 CTP + ATP = a tRNA with a 3' CCACCA end + 3 diphosphate. Its function is as follows. Catalyzes the addition and repair of the essential 3'-terminal CCA sequence in tRNAs without using a nucleic acid template. Adds these three nucleotides in the order of C, C, and A to the tRNA nucleotide-73, using CTP and ATP as substrates and producing inorganic pyrophosphate. tRNA 3'-terminal CCA addition is required both for tRNA processing and repair. Also involved in tRNA surveillance by mediating tandem CCA addition to generate a CCACCA at the 3' terminus of unstable tRNAs. While stable tRNAs receive only 3'-terminal CCA, unstable tRNAs are marked with CCACCA and rapidly degraded. In Pasteurella multocida (strain Pm70), this protein is Multifunctional CCA protein.